We begin with the raw amino-acid sequence, 71 residues long: Pro-glucagon (71 aa).

Belongs to the glucagon family.

It is found in the secreted. Its function is as follows. Plays a key role in glucose metabolism and homeostasis. Regulates blood glucose by increasing gluconeogenesis and decreasing glycolysis. This is Pro-glucagon (gcg) from Ictalurus punctatus (Channel catfish).